The primary structure comprises 140 residues: uncharacterized protein (140 aa).

The region spanning 4 to 127 (TLTHLALHVP…AGNYVEFSYG (124 aa)) is the VOC domain.

This is an uncharacterized protein from Pseudomonas aeruginosa (strain ATCC 15692 / DSM 22644 / CIP 104116 / JCM 14847 / LMG 12228 / 1C / PRS 101 / PAO1).